Consider the following 329-residue polypeptide: Probable ABC transporter permease protein MG188 (329 aa).

6 consecutive transmembrane segments (helical) span residues 30–50 (FLLF…PFFL), 96–116 (LISL…IVFV), 128–148 (VFFL…VYIF), 176–196 (ALWA…VLII), 234–254 (LIFL…LALF), and 283–303 (NLAG…GLVL). Residues 88 to 303 (LRNSFLYSLI…VLGVCYGLVL (216 aa)) form the ABC transmembrane type-1 domain.

This sequence belongs to the binding-protein-dependent transport system permease family. MalFG subfamily.

It is found in the cell membrane. Functionally, probably part of a binding-protein-dependent transport system. Probably responsible for the translocation of the substrate across the membrane. In Mycoplasma genitalium (strain ATCC 33530 / DSM 19775 / NCTC 10195 / G37) (Mycoplasmoides genitalium), this protein is Probable ABC transporter permease protein MG188.